A 158-amino-acid chain; its full sequence is Phosphopantetheine adenylyltransferase (158 aa).

Residue S9 coordinates substrate. Residues S9–F10 and H17 contribute to the ATP site. Substrate is bound by residues K41, T73, and R87. ATP is bound by residues G88–R90, E98, and N122–S128.

This sequence belongs to the bacterial CoaD family. As to quaternary structure, homohexamer. Requires Mg(2+) as cofactor.

The protein resides in the cytoplasm. The enzyme catalyses (R)-4'-phosphopantetheine + ATP + H(+) = 3'-dephospho-CoA + diphosphate. Its pathway is cofactor biosynthesis; coenzyme A biosynthesis; CoA from (R)-pantothenate: step 4/5. In terms of biological role, reversibly transfers an adenylyl group from ATP to 4'-phosphopantetheine, yielding dephospho-CoA (dPCoA) and pyrophosphate. The polypeptide is Phosphopantetheine adenylyltransferase (Leuconostoc citreum (strain KM20)).